Here is a 112-residue protein sequence, read N- to C-terminus: Iron-sulfur cluster assembly protein CyaY (112 aa).

The protein belongs to the frataxin family.

In terms of biological role, involved in iron-sulfur (Fe-S) cluster assembly. May act as a regulator of Fe-S biogenesis. The sequence is that of Iron-sulfur cluster assembly protein CyaY from Janthinobacterium sp. (strain Marseille) (Minibacterium massiliensis).